We begin with the raw amino-acid sequence, 320 residues long: Homeobox-leucine zipper protein HOX25 (320 aa).

Residues 79–139 (AAARKRRLTA…NRRARWKTKQ (61 aa)) constitute a DNA-binding region (homeobox). Residues 138–182 (KQLELDFDRLRAAHDELLAGRTALAADNESLRSQVILLTEKLQAN) form a leucine-zipper region. Disordered regions lie at residues 181-209 (ANGKSPSPSPAPAEQTAVPAAPESAKSFQ) and 249-282 (DSPESYFAGARSPPSSSEDDCGGAGSDDDYPSSS). Over residues 265–278 (SEDDCGGAGSDDDY) the composition is skewed to acidic residues.

It belongs to the HD-ZIP homeobox family. Class I subfamily. In terms of tissue distribution, expressed in roots, leaf sheaths and blades and panicles.

The protein resides in the nucleus. Probable transcription factor. In Oryza sativa subsp. japonica (Rice), this protein is Homeobox-leucine zipper protein HOX25 (HOX25).